A 403-amino-acid chain; its full sequence is S-adenosylmethionine synthase (403 aa).

H15 lines the ATP pocket. D17 is a binding site for Mg(2+). Residue E43 coordinates K(+). Residues E56 and Q99 each contribute to the L-methionine site. A flexible loop region spans residues 99–109 (QSPDINQGVDR). ATP contacts are provided by residues 166–168 (DAK), 232–233 (KF), D241, 247–248 (RK), A264, and K268. D241 is an L-methionine binding site. An L-methionine-binding site is contributed by K272.

Belongs to the AdoMet synthase family. Homotetramer; dimer of dimers. It depends on Mg(2+) as a cofactor. K(+) is required as a cofactor.

It localises to the cytoplasm. It carries out the reaction L-methionine + ATP + H2O = S-adenosyl-L-methionine + phosphate + diphosphate. Its pathway is amino-acid biosynthesis; S-adenosyl-L-methionine biosynthesis; S-adenosyl-L-methionine from L-methionine: step 1/1. Functionally, catalyzes the formation of S-adenosylmethionine (AdoMet) from methionine and ATP. The overall synthetic reaction is composed of two sequential steps, AdoMet formation and the subsequent tripolyphosphate hydrolysis which occurs prior to release of AdoMet from the enzyme. This Xanthomonas campestris pv. campestris (strain 8004) protein is S-adenosylmethionine synthase.